The sequence spans 354 residues: Histidinol-phosphate aminotransferase (354 aa).

Position 208 is an N6-(pyridoxal phosphate)lysine (Lys-208).

Belongs to the class-II pyridoxal-phosphate-dependent aminotransferase family. Histidinol-phosphate aminotransferase subfamily. In terms of assembly, homodimer. Pyridoxal 5'-phosphate is required as a cofactor.

The enzyme catalyses L-histidinol phosphate + 2-oxoglutarate = 3-(imidazol-4-yl)-2-oxopropyl phosphate + L-glutamate. It functions in the pathway amino-acid biosynthesis; L-histidine biosynthesis; L-histidine from 5-phospho-alpha-D-ribose 1-diphosphate: step 7/9. This chain is Histidinol-phosphate aminotransferase, found in Aquifex aeolicus (strain VF5).